We begin with the raw amino-acid sequence, 141 residues long: Hemoglobin subunit alpha-A (141 aa).

Residues 1-141 form the Globin domain; the sequence is VLSAADKANV…VGAVLTAKYR (141 aa). H58 contributes to the O2 binding site. H87 is a binding site for heme b.

Belongs to the globin family. In terms of assembly, heterotetramer of two alpha chains and two beta chains. In terms of tissue distribution, red blood cells.

Functionally, involved in oxygen transport from the lung to the various peripheral tissues. This is Hemoglobin subunit alpha-A (HBAA) from Chloephaga melanoptera (Andean goose).